We begin with the raw amino-acid sequence, 577 residues long: Protein CBFA2T1 (577 aa).

Over residues 1-10 (MPDRTEKHST) the composition is skewed to basic and acidic residues. Positions 1 to 87 (MPDRTEKHST…SSSSLANQQL (87 aa)) are disordered. Ser14 is subject to Phosphoserine. Positions 42-59 (SSFTPTTLTNGTSHSPTA) are enriched in polar residues. The span at 68 to 87 (NGFSNGPSSSSSSSLANQQL) shows a compositional bias: low complexity. The region spanning 93–188 (ARQLSKLKRF…NPAQYLAQHE (96 aa)) is the TAFH domain. Residues 203–271 (SELLLDVNEN…LPHPTPPPPQ (69 aa)) form a disordered region. The span at 211–237 (ENGKRRTPDRTKENGFDREPLHSEHPS) shows a compositional bias: basic and acidic residues. Polar residues predominate over residues 244–258 (SPGQRYSPNNGLSYQ). A compositionally biased stretch (pro residues) spans 262-271 (LPHPTPPPPQ). Residues 310–356 (QEEMIDHRLTDREWAEEWKHLDHLLNCIMDMVEKTRRSLTVLRRCQE) form an important for oligomerization region. The interval 310-356 (QEEMIDHRLTDREWAEEWKHLDHLLNCIMDMVEKTRRSLTVLRRCQE) is nervy homology region 2 (NHR2). The interval 374 to 396 (DLKKGGSSSSSHSRQQSPVNPDP) is disordered. Over residues 380 to 390 (SSSSSHSRQQS) the composition is skewed to low complexity. Ser390 is modified (phosphoserine). Residues 416 to 465 (EEIWKKAEEAVNEVKRQAMTELQKAVSEAERKAHDMITTERAKMERTVAE) form a nervy homology region 3 (NHR3) region. Zn(2+) contacts are provided by Cys488, Cys491, Cys499, Cys502, Cys508, Cys512, His520, and Cys524. The segment at 488-524 (CWNCGRKASETCSGCNTARYCGSFCQHKDWEKHHHIC) adopts an MYND-type zinc-finger fold. Residues 529 to 577 (QAPQQGDTPAVSSSVTPSSGAGSPMDTPPAATPRSTTPGTPSTIETTPR) form a disordered region. 2 stretches are compositionally biased toward low complexity: residues 536–553 (TPAV…GSPM) and 560–577 (TPRS…TTPR).

It belongs to the CBFA2T family. In terms of assembly, homotetramer. Heterotetramer with CBFA2T2 and CBFA2T3. Interacts with TCF12, SIN3A, HDAC1, HDAC2, HDAC3, NCOR1 and NCOR2. Interacts with ATN1 (via its N-terminus); the interaction enhances the transcriptional repression.

The protein resides in the nucleus. Transcriptional corepressor which facilitates transcriptional repression via its association with DNA-binding transcription factors and recruitment of other corepressors and histone-modifying enzymes. Can repress the expression of MMP7 in a ZBTB33-dependent manner. Can repress transactivation mediated by TCF12. Acts as a negative regulator of adipogenesis. This Mus musculus (Mouse) protein is Protein CBFA2T1 (Runx1t1).